The primary structure comprises 61 residues: Small ribosomal subunit protein uS14 (61 aa).

Zn(2+) is bound by residues Cys-24, Cys-27, Cys-40, and Cys-43.

It belongs to the universal ribosomal protein uS14 family. Zinc-binding uS14 subfamily. In terms of assembly, part of the 30S ribosomal subunit. Contacts proteins S3 and S10. Requires Zn(2+) as cofactor.

Binds 16S rRNA, required for the assembly of 30S particles and may also be responsible for determining the conformation of the 16S rRNA at the A site. The chain is Small ribosomal subunit protein uS14 from Campylobacter lari (strain RM2100 / D67 / ATCC BAA-1060).